We begin with the raw amino-acid sequence, 201 residues long: MRHQRLEGRHIIRIAPGEYHVTTGGGVISTLLGSCVAACLFDSESGVAGMNHFLLSNHRYSRTMPFCFTEAGRYGIHSMELLINSLMRHGARRENLRAKAFGGASILVNRAEVGNFSCVGSVNARFVREFLANEGIPLLSADLEGERGRVIYFDTTDFSVFVRKIRLQRSLVVAKRDRNVWEHGVQAHDVEPDSVDLWLPG.

The protein belongs to the CheD family.

It carries out the reaction L-glutaminyl-[protein] + H2O = L-glutamyl-[protein] + NH4(+). Probably deamidates glutamine residues to glutamate on methyl-accepting chemotaxis receptors (MCPs), playing an important role in chemotaxis. This chain is Probable chemoreceptor glutamine deamidase CheD 1, found in Geobacter sulfurreducens (strain ATCC 51573 / DSM 12127 / PCA).